The chain runs to 172 residues: MPRSQINGNFIDKTSSIVANILLRIIPTTSGEKKAFTYYRDGAIMSAQSEGNYAEALQNYYEATRSEIDPYDRSYILYNIGLIHTSNGEHTKALEYYFQAIERNPFLPQAFNNMAVICHYQGERAILRGDSEIAEAWFDQAAEYWKQAIGLTPGNYIEAHNWLKITRRLEFE.

TPR repeat units follow at residues 35-70 (AFTY…EIDP), 74-107 (SYIL…NPFL), and 122-155 (GERA…TPGN).

Belongs to the Ycf3 family.

It localises to the plastid. The protein localises to the chloroplast thylakoid membrane. Functionally, essential for the assembly of the photosystem I (PSI) complex. May act as a chaperone-like factor to guide the assembly of the PSI subunits. In Dioscorea elephantipes (Elephant's foot yam), this protein is Photosystem I assembly protein Ycf3.